Reading from the N-terminus, the 572-residue chain is Urease subunit alpha (572 aa).

The 439-residue stretch at 134-572 (GGIDAHVHFI…LPMAQRYFLF (439 aa)) folds into the Urease domain. His139, His141, and Lys222 together coordinate Ni(2+). An N6-carboxylysine modification is found at Lys222. His224 provides a ligand contact to substrate. His251 and His277 together coordinate Ni(2+). His325 acts as the Proton donor in catalysis. Ni(2+) is bound at residue Asp365.

Belongs to the metallo-dependent hydrolases superfamily. Urease alpha subunit family. Heterotrimer of UreA (gamma), UreB (beta) and UreC (alpha) subunits. Three heterotrimers associate to form the active enzyme. It depends on Ni cation as a cofactor. Carboxylation allows a single lysine to coordinate two nickel ions.

The protein resides in the cytoplasm. The enzyme catalyses urea + 2 H2O + H(+) = hydrogencarbonate + 2 NH4(+). It participates in nitrogen metabolism; urea degradation; CO(2) and NH(3) from urea (urease route): step 1/1. The protein is Urease subunit alpha of Synechococcus sp. (strain JA-2-3B'a(2-13)) (Cyanobacteria bacterium Yellowstone B-Prime).